The chain runs to 492 residues: N-succinylglutamate 5-semialdehyde dehydrogenase (492 aa).

220–225 (GSANTG) is a binding site for NAD(+). Residues glutamate 243 and cysteine 277 contribute to the active site.

It belongs to the aldehyde dehydrogenase family. AstD subfamily.

The catalysed reaction is N-succinyl-L-glutamate 5-semialdehyde + NAD(+) + H2O = N-succinyl-L-glutamate + NADH + 2 H(+). Its pathway is amino-acid degradation; L-arginine degradation via AST pathway; L-glutamate and succinate from L-arginine: step 4/5. In terms of biological role, catalyzes the NAD-dependent reduction of succinylglutamate semialdehyde into succinylglutamate. The chain is N-succinylglutamate 5-semialdehyde dehydrogenase from Escherichia coli (strain SE11).